The sequence spans 711 residues: Polyribonucleotide nucleotidyltransferase (711 aa).

Residues aspartate 486 and aspartate 492 each contribute to the Mg(2+) site. The KH domain occupies 553–612 (PRIHTIKISTDKIKDVIGKGGSVIRALTEETGTTIEIEDDGTVKIAATDGEKAKYAIRRI). The region spanning 622–690 (GRIYNSKVTR…RQGRVRLSIK (69 aa)) is the S1 motif domain. Residues 689-711 (IKEATEQSQPAAAPEAPASEQAE) form a disordered region. Residues 694–711 (EQSQPAAAPEAPASEQAE) show a composition bias toward low complexity.

This sequence belongs to the polyribonucleotide nucleotidyltransferase family. Component of the RNA degradosome, which is a multiprotein complex involved in RNA processing and mRNA degradation. The cofactor is Mg(2+).

The protein resides in the cytoplasm. It catalyses the reaction RNA(n+1) + phosphate = RNA(n) + a ribonucleoside 5'-diphosphate. Involved in mRNA degradation. Catalyzes the phosphorolysis of single-stranded polyribonucleotides processively in the 3'- to 5'-direction. The polypeptide is Polyribonucleotide nucleotidyltransferase (Salmonella typhi).